Reading from the N-terminus, the 196-residue chain is Ribonuclease HII (196 aa).

The region spanning 9–196 (SLIAGVDEVG…APVKRAIGLK (188 aa)) is the RNase H type-2 domain. 3 residues coordinate a divalent metal cation: aspartate 15, glutamate 16, and aspartate 107.

Belongs to the RNase HII family. It depends on Mn(2+) as a cofactor. The cofactor is Mg(2+).

The protein resides in the cytoplasm. The catalysed reaction is Endonucleolytic cleavage to 5'-phosphomonoester.. Its function is as follows. Endonuclease that specifically degrades the RNA of RNA-DNA hybrids. The polypeptide is Ribonuclease HII (Photorhabdus laumondii subsp. laumondii (strain DSM 15139 / CIP 105565 / TT01) (Photorhabdus luminescens subsp. laumondii)).